A 422-amino-acid chain; its full sequence is Glycerol-3-phosphate dehydrogenase [NAD(+)] 2 (422 aa).

NAD(+) is bound by residues 69 to 74, Phe-157, Lys-180, and Ala-213; that span reads GSGNWG. Lys-180 serves as a coordination point for substrate. Residue Lys-273 is the Proton acceptor of the active site. Arg-338 and Gln-367 together coordinate NAD(+). 338-339 provides a ligand contact to substrate; the sequence is RN.

This sequence belongs to the NAD-dependent glycerol-3-phosphate dehydrogenase family.

It catalyses the reaction sn-glycerol 3-phosphate + NAD(+) = dihydroxyacetone phosphate + NADH + H(+). This chain is Glycerol-3-phosphate dehydrogenase [NAD(+)] 2 (GPD2), found in Candida glabrata (strain ATCC 2001 / BCRC 20586 / JCM 3761 / NBRC 0622 / NRRL Y-65 / CBS 138) (Yeast).